Consider the following 143-residue polypeptide: UPF0763 protein HH_0976 (143 aa).

This sequence belongs to the UPF0763 family.

This chain is UPF0763 protein HH_0976, found in Helicobacter hepaticus (strain ATCC 51449 / 3B1).